Consider the following 460-residue polypeptide: Mogroside I-E synthase (460 aa).

Residue His-25 is the Proton acceptor of the active site. Asp-114 serves as the catalytic Charge relay. The UDP-alpha-D-glucose site is built by Ser-286, Cys-339, Gln-341, Trp-359, Asn-360, Ser-361, Glu-364, Asp-380, and Gln-381.

The protein belongs to the UDP-glycosyltransferase family. Highly expressed in young fruits 15 days after anthesis (15-DAA).

The catalysed reaction is mogrol + UDP-alpha-D-glucose = mogroside IE + UDP + H(+). It carries out the reaction mogroside I-A1 + UDP-alpha-D-glucose = mogroside IIE + UDP + H(+). It catalyses the reaction mogroside II-A1 + UDP-alpha-D-glucose = mogroside IIIX + UDP + H(+). The enzyme catalyses mogroside II-A + UDP-alpha-D-glucose = mogroside III + UDP + H(+). The catalysed reaction is mogroside III-A1 + UDP-alpha-D-glucose = siamenoside I + UDP + H(+). It functions in the pathway secondary metabolite biosynthesis; terpenoid biosynthesis. Its function is as follows. UDP-glycosyltransferase involved in the biosynthesis of cucurbitacin and mogroside tetracyclic triterpene natural products (e.g. siamenoside I and mogrosides IV, V and VI). Cucurbitacins have cytotoxic properties and exhibit deterrent taste as a defense barrier against herbivores. Mogrosides are nonsugar highly oxygenated compounds used as high-intensity zero-calorie sweeteners; they also possess pharmacological properties such as regulating immunity, lowering blood sugar and lipid levels, protecting the liver, and acting as antioxidants and antitumor agents. Catalyzes the C3 primary glucosylation of mogrol, mogroside I-A1, mogroside II-A1, mogroside II-A and mogroside III-A1. This Siraitia grosvenorii (Monk's fruit) protein is Mogroside I-E synthase.